Reading from the N-terminus, the 254-residue chain is Imidazole glycerol phosphate synthase subunit HisF (254 aa).

Active-site residues include D12 and D131.

Belongs to the HisA/HisF family. In terms of assembly, heterodimer of HisH and HisF.

The protein localises to the cytoplasm. The enzyme catalyses 5-[(5-phospho-1-deoxy-D-ribulos-1-ylimino)methylamino]-1-(5-phospho-beta-D-ribosyl)imidazole-4-carboxamide + L-glutamine = D-erythro-1-(imidazol-4-yl)glycerol 3-phosphate + 5-amino-1-(5-phospho-beta-D-ribosyl)imidazole-4-carboxamide + L-glutamate + H(+). It functions in the pathway amino-acid biosynthesis; L-histidine biosynthesis; L-histidine from 5-phospho-alpha-D-ribose 1-diphosphate: step 5/9. Functionally, IGPS catalyzes the conversion of PRFAR and glutamine to IGP, AICAR and glutamate. The HisF subunit catalyzes the cyclization activity that produces IGP and AICAR from PRFAR using the ammonia provided by the HisH subunit. The chain is Imidazole glycerol phosphate synthase subunit HisF from Leuconostoc mesenteroides subsp. mesenteroides (strain ATCC 8293 / DSM 20343 / BCRC 11652 / CCM 1803 / JCM 6124 / NCDO 523 / NBRC 100496 / NCIMB 8023 / NCTC 12954 / NRRL B-1118 / 37Y).